Reading from the N-terminus, the 325-residue chain is Ribose-phosphate pyrophosphokinase 4 (325 aa).

Mg(2+) is bound by residues aspartate 145 and histidine 147. The interval 228–243 is binding of phosphoribosylpyrophosphate; the sequence is GRHVVIVDDLVQSGGT.

It belongs to the ribose-phosphate pyrophosphokinase family. The cofactor is Mg(2+).

The catalysed reaction is D-ribose 5-phosphate + ATP = 5-phospho-alpha-D-ribose 1-diphosphate + AMP + H(+). In Oryza sativa subsp. japonica (Rice), this protein is Ribose-phosphate pyrophosphokinase 4.